The primary structure comprises 323 residues: METPIKIVAGRSNPELAKKIAAYLGTPLCDAKAENFSDGEISVNYFESIRGSDMFIIQSTNPPADNLMELLIMIDAAKRSSAYRITAVLPYYGYARQDRKDKPRVAITAKLVANLLTQAGADRILTMDLHAPQIQGFFDIPFDHLYSSVVLIDHVKNMDIADNLVVASPDVGGVKLARKFASELGTELVIVDKRRPKANVAEVMNIIGDVKGKNVLLVDDMIDTAGTIVNAAKAIKEAGGLKIYAAATHPILSGPAIERINTSVFEKVIVTDSLVSEHDFCSKIETVTISNLFGEAIKRIYDGESVSYLFDSKNISQKITNHH.

Residues 38–40 (DGE) and 96–97 (RQ) each bind ATP. Mg(2+) is bound by residues H130 and D170. The active site involves K193. D-ribose 5-phosphate contacts are provided by residues R195, D219, and 223–227 (DTAGT).

The protein belongs to the ribose-phosphate pyrophosphokinase family. Class I subfamily. Homohexamer. Requires Mg(2+) as cofactor.

The protein resides in the cytoplasm. The enzyme catalyses D-ribose 5-phosphate + ATP = 5-phospho-alpha-D-ribose 1-diphosphate + AMP + H(+). It functions in the pathway metabolic intermediate biosynthesis; 5-phospho-alpha-D-ribose 1-diphosphate biosynthesis; 5-phospho-alpha-D-ribose 1-diphosphate from D-ribose 5-phosphate (route I): step 1/1. In terms of biological role, involved in the biosynthesis of the central metabolite phospho-alpha-D-ribosyl-1-pyrophosphate (PRPP) via the transfer of pyrophosphoryl group from ATP to 1-hydroxyl of ribose-5-phosphate (Rib-5-P). The chain is Ribose-phosphate pyrophosphokinase from Chlorobaculum tepidum (strain ATCC 49652 / DSM 12025 / NBRC 103806 / TLS) (Chlorobium tepidum).